Consider the following 383-residue polypeptide: Anhydro-N-acetylmuramic acid kinase (383 aa).

An ATP-binding site is contributed by 9-16 (GTSLDGID).

The protein belongs to the anhydro-N-acetylmuramic acid kinase family.

The enzyme catalyses 1,6-anhydro-N-acetyl-beta-muramate + ATP + H2O = N-acetyl-D-muramate 6-phosphate + ADP + H(+). It participates in amino-sugar metabolism; 1,6-anhydro-N-acetylmuramate degradation. It functions in the pathway cell wall biogenesis; peptidoglycan recycling. Its function is as follows. Catalyzes the specific phosphorylation of 1,6-anhydro-N-acetylmuramic acid (anhMurNAc) with the simultaneous cleavage of the 1,6-anhydro ring, generating MurNAc-6-P. Is required for the utilization of anhMurNAc either imported from the medium or derived from its own cell wall murein, and thus plays a role in cell wall recycling. The protein is Anhydro-N-acetylmuramic acid kinase of Bacillus cereus (strain ATCC 10987 / NRS 248).